Here is a 335-residue protein sequence, read N- to C-terminus: MVGIRYDWQELEIRAIYNTPLLELIYQAASVHRQYHDPTKIQVCKLISIKTGGCPEDCSYCAQSSRYKTEVKAEALLEKETVVNIAQKAKETGVSRICMGAAWREVRDNSQFEEVLEMVKDITAMGLEVCCTLGMLTANQARKLEEAGLYAYNHNLDTSQEYYSTIITTRTYSDRLNTIENVRQTNVTVCSGGILGLGETVDDRVGMLQTLANLHPHPESVPINILSQVPGTPLENQPDVPIWDIVRMIATARILMPASDVRLSAGRARLSQVEQAFCFMAGANSIFSSDDNKMLTVTTPCPDYDTDREMLNLLGLGMRPPSQRQEKVASPAVVG.

A Radical SAM core domain is found at 39 to 267 (TKIQVCKLIS…ASDVRLSAGR (229 aa)). 3 residues coordinate [4Fe-4S] cluster: C54, C58, and C61. [2Fe-2S] cluster-binding residues include C98, C130, C190, and R262.

It belongs to the radical SAM superfamily. Biotin synthase family. Homodimer. Requires [4Fe-4S] cluster as cofactor. The cofactor is [2Fe-2S] cluster.

It catalyses the reaction (4R,5S)-dethiobiotin + (sulfur carrier)-SH + 2 reduced [2Fe-2S]-[ferredoxin] + 2 S-adenosyl-L-methionine = (sulfur carrier)-H + biotin + 2 5'-deoxyadenosine + 2 L-methionine + 2 oxidized [2Fe-2S]-[ferredoxin]. It functions in the pathway cofactor biosynthesis; biotin biosynthesis; biotin from 7,8-diaminononanoate: step 2/2. Its function is as follows. Catalyzes the conversion of dethiobiotin (DTB) to biotin by the insertion of a sulfur atom into dethiobiotin via a radical-based mechanism. In Nostoc punctiforme (strain ATCC 29133 / PCC 73102), this protein is Biotin synthase.